The chain runs to 352 residues: Ion-translocating oxidoreductase complex subunit D (352 aa).

The next 4 helical transmembrane spans lie at 20–40 (IMLL…WFFG), 42–62 (GTLV…ALVL), 89–109 (IPPL…VIIA), and 123–143 (PAMI…TSWL). Thr-187 carries the FMN phosphoryl threonine modification. 5 helical membrane-spanning segments follow: residues 214–234 (ILAG…GVWL), 242–262 (WHIP…GWLF), 267–287 (LAAP…FFIL), 301–321 (LIFG…GGYP), and 322–342 (DGVA…DYYT).

Belongs to the NqrB/RnfD family. In terms of assembly, the complex is composed of six subunits: RsxA, RsxB, RsxC, RsxD, RsxE and RsxG. It depends on FMN as a cofactor.

The protein localises to the cell inner membrane. Its function is as follows. Part of a membrane-bound complex that couples electron transfer with translocation of ions across the membrane. Required to maintain the reduced state of SoxR. The protein is Ion-translocating oxidoreductase complex subunit D of Escherichia coli O81 (strain ED1a).